The primary structure comprises 750 residues: Photosystem I P700 chlorophyll a apoprotein A1 (750 aa).

8 consecutive transmembrane segments (helical) span residues 70–93, 156–179, 195–219, 291–309, 346–369, 385–411, 433–455, and 531–549; these read VFSAHFGQLSIIFLWLSGMYFHGA, LYCTAIGALVFAALMLFAGWFHYH, LNHHLAGLLGLGSLSWAGHQVHVSL, IAHHHLAIAILFLIAGHMY, WHAQLSLNLAMLGSLTIVVAHHMY, LSLFTHHMWIGGFLIVGAAAHAAIFMV, AIISHLNWVCIFLGFHSFGLYIH, and FLVHHIHAFTIHVTVLILL. Residues cysteine 573 and cysteine 582 each contribute to the [4Fe-4S] cluster site. Helical transmembrane passes span 589-610 and 664-686; these read HVFLGLFWMYNAISVVIFHFSW and LSAYGLFFLGAHFVWAFSLMFLF. Histidine 675 is a binding site for chlorophyll a'. Methionine 683 and tyrosine 691 together coordinate chlorophyll a. Tryptophan 692 contributes to the phylloquinone binding site. The helical transmembrane segment at 724-744 threads the bilayer; sequence AVGVTHYLLGGIATTWAFFLA.

This sequence belongs to the PsaA/PsaB family. As to quaternary structure, the PsaA/B heterodimer binds the P700 chlorophyll special pair and subsequent electron acceptors. PSI consists of a core antenna complex that captures photons, and an electron transfer chain that converts photonic excitation into a charge separation. The eukaryotic PSI reaction center is composed of at least 11 subunits. The cofactor is P700 is a chlorophyll a/chlorophyll a' dimer, A0 is one or more chlorophyll a, A1 is one or both phylloquinones and FX is a shared 4Fe-4S iron-sulfur center..

It localises to the plastid. It is found in the chloroplast thylakoid membrane. It catalyses the reaction reduced [plastocyanin] + hnu + oxidized [2Fe-2S]-[ferredoxin] = oxidized [plastocyanin] + reduced [2Fe-2S]-[ferredoxin]. Functionally, psaA and PsaB bind P700, the primary electron donor of photosystem I (PSI), as well as the electron acceptors A0, A1 and FX. PSI is a plastocyanin-ferredoxin oxidoreductase, converting photonic excitation into a charge separation, which transfers an electron from the donor P700 chlorophyll pair to the spectroscopically characterized acceptors A0, A1, FX, FA and FB in turn. Oxidized P700 is reduced on the lumenal side of the thylakoid membrane by plastocyanin. The sequence is that of Photosystem I P700 chlorophyll a apoprotein A1 from Aethionema cordifolium (Lebanon stonecress).